The sequence spans 362 residues: Methionine import ATP-binding protein MetN (362 aa).

In terms of domain architecture, ABC transporter spans 2-241 (IHIKNLSKTY…PQHDVTRAMV (240 aa)). An ATP-binding site is contributed by 38-45 (GPSGAGKS).

The protein belongs to the ABC transporter superfamily. Methionine importer (TC 3.A.1.24) family. As to quaternary structure, the complex is composed of two ATP-binding proteins (MetN), two transmembrane proteins (MetI) and a solute-binding protein (MetQ).

Its subcellular location is the cell inner membrane. The enzyme catalyses L-methionine(out) + ATP + H2O = L-methionine(in) + ADP + phosphate + H(+). It carries out the reaction D-methionine(out) + ATP + H2O = D-methionine(in) + ADP + phosphate + H(+). Its function is as follows. Part of the ABC transporter complex MetNIQ involved in methionine import. Responsible for energy coupling to the transport system. The protein is Methionine import ATP-binding protein MetN of Bordetella avium (strain 197N).